The sequence spans 414 residues: 2,3-bisphosphoglycerate-independent phosphoglycerate mutase (414 aa).

Belongs to the BPG-independent phosphoglycerate mutase family. A-PGAM subfamily.

The catalysed reaction is (2R)-2-phosphoglycerate = (2R)-3-phosphoglycerate. It functions in the pathway carbohydrate degradation; glycolysis; pyruvate from D-glyceraldehyde 3-phosphate: step 3/5. In terms of biological role, catalyzes the interconversion of 2-phosphoglycerate and 3-phosphoglycerate. The protein is 2,3-bisphosphoglycerate-independent phosphoglycerate mutase of Saccharolobus islandicus (strain L.S.2.15 / Lassen #1) (Sulfolobus islandicus).